The chain runs to 212 residues: Cytochrome c biogenesis ATP-binding export protein CcmA (212 aa).

The region spanning 8-212 (LQATALACER…RSIDLAKGSA (205 aa)) is the ABC transporter domain. 40–47 (GPNGSGKT) is an ATP binding site.

Belongs to the ABC transporter superfamily. CcmA exporter (TC 3.A.1.107) family. The complex is composed of two ATP-binding proteins (CcmA) and two transmembrane proteins (CcmB).

Its subcellular location is the cell inner membrane. The catalysed reaction is heme b(in) + ATP + H2O = heme b(out) + ADP + phosphate + H(+). Its function is as follows. Part of the ABC transporter complex CcmAB involved in the biogenesis of c-type cytochromes; once thought to export heme, this seems not to be the case, but its exact role is uncertain. Responsible for energy coupling to the transport system. The protein is Cytochrome c biogenesis ATP-binding export protein CcmA of Pseudomonas syringae pv. tomato (strain ATCC BAA-871 / DC3000).